The sequence spans 169 residues: Procalin (169 aa).

Positions 1–18 are cleaved as a signal peptide; that stretch reads MKTFIVITFIGILSYAYA. 3 disulfide bridges follow: C21–C125, C54–C168, and C83–C97.

This sequence belongs to the calycin superfamily. Triabin family. Expressed in salivary glands.

The protein resides in the secreted. This chain is Procalin, found in Hospesneotomae protracta (Western bloodsucking conenose).